Consider the following 184-residue polypeptide: Large ribosomal subunit protein eL18 (184 aa).

Belongs to the eukaryotic ribosomal protein eL18 family.

Its subcellular location is the cytoplasm. The protein is Large ribosomal subunit protein eL18 (RPL18) of Theileria parva (East coast fever infection agent).